A 264-amino-acid chain; its full sequence is 3-methyl-2-oxobutanoate hydroxymethyltransferase (264 aa).

Asp45 and Asp84 together coordinate Mg(2+). Residues Asp45–Ser46, Asp84, and Lys112 contribute to the 3-methyl-2-oxobutanoate site. Position 114 (Glu114) interacts with Mg(2+). Glu181 acts as the Proton acceptor in catalysis.

Belongs to the PanB family. In terms of assembly, homodecamer; pentamer of dimers. Requires Mg(2+) as cofactor.

The protein localises to the cytoplasm. The catalysed reaction is 3-methyl-2-oxobutanoate + (6R)-5,10-methylene-5,6,7,8-tetrahydrofolate + H2O = 2-dehydropantoate + (6S)-5,6,7,8-tetrahydrofolate. Its pathway is cofactor biosynthesis; (R)-pantothenate biosynthesis; (R)-pantoate from 3-methyl-2-oxobutanoate: step 1/2. Catalyzes the reversible reaction in which hydroxymethyl group from 5,10-methylenetetrahydrofolate is transferred onto alpha-ketoisovalerate to form ketopantoate. This chain is 3-methyl-2-oxobutanoate hydroxymethyltransferase, found in Aliivibrio fischeri (strain MJ11) (Vibrio fischeri).